A 190-amino-acid polypeptide reads, in one-letter code: Threonylcarbamoyl-AMP synthase (190 aa).

In terms of domain architecture, YrdC-like spans 7–190 (IGSIAAAVDL…ALTGELFRQG (184 aa)).

The protein belongs to the SUA5 family. TsaC subfamily.

The protein resides in the cytoplasm. It catalyses the reaction L-threonine + hydrogencarbonate + ATP = L-threonylcarbamoyladenylate + diphosphate + H2O. Functionally, required for the formation of a threonylcarbamoyl group on adenosine at position 37 (t(6)A37) in tRNAs that read codons beginning with adenine. Catalyzes the conversion of L-threonine, HCO(3)(-)/CO(2) and ATP to give threonylcarbamoyl-AMP (TC-AMP) as the acyladenylate intermediate, with the release of diphosphate. The chain is Threonylcarbamoyl-AMP synthase from Salmonella typhimurium (strain LT2 / SGSC1412 / ATCC 700720).